A 184-amino-acid chain; its full sequence is ATP synthase subunit delta (184 aa).

This sequence belongs to the ATPase delta chain family. As to quaternary structure, F-type ATPases have 2 components, F(1) - the catalytic core - and F(0) - the membrane proton channel. F(1) has five subunits: alpha(3), beta(3), gamma(1), delta(1), epsilon(1). F(0) has three main subunits: a(1), b(2) and c(10-14). The alpha and beta chains form an alternating ring which encloses part of the gamma chain. F(1) is attached to F(0) by a central stalk formed by the gamma and epsilon chains, while a peripheral stalk is formed by the delta and b chains.

The protein localises to the cell inner membrane. F(1)F(0) ATP synthase produces ATP from ADP in the presence of a proton or sodium gradient. F-type ATPases consist of two structural domains, F(1) containing the extramembraneous catalytic core and F(0) containing the membrane proton channel, linked together by a central stalk and a peripheral stalk. During catalysis, ATP synthesis in the catalytic domain of F(1) is coupled via a rotary mechanism of the central stalk subunits to proton translocation. In terms of biological role, this protein is part of the stalk that links CF(0) to CF(1). It either transmits conformational changes from CF(0) to CF(1) or is implicated in proton conduction. The protein is ATP synthase subunit delta of Paramagnetospirillum magneticum (strain ATCC 700264 / AMB-1) (Magnetospirillum magneticum).